The sequence spans 87 residues: Diazepam-binding inhibitor-like 5 (87 aa).

The ACB domain occupies 2 to 87; sequence SQVEFEMACA…VEELKKKEPC (86 aa). An acyl-CoA-binding positions include 29–33, lysine 55, and tyrosine 74; that span reads YSFYK.

Belongs to the ACBP family. In terms of tissue distribution, exclusively expressed in late spermatids and spermatozoa. Not found in epididymis, spleen, bone marrow, skin, liver, brain, heart, kidney, muscle.

The protein localises to the cytoplasm. Its function is as follows. May be involved in the energy metabolism of the mature sperm. In Mus musculus (Mouse), this protein is Diazepam-binding inhibitor-like 5 (Dbil5).